Consider the following 388-residue polypeptide: L-lactate dehydrogenase (388 aa).

Residues 1–380 (MIISSSSDYR…SRDSLVREIE (380 aa)) enclose the FMN hydroxy acid dehydrogenase domain. Y24 contributes to the substrate binding site. Residues S106 and Q127 each coordinate FMN. Y129 is a binding site for substrate. T155 contributes to the FMN binding site. Residue R164 participates in substrate binding. K251 is an FMN binding site. H275 functions as the Proton acceptor in the catalytic mechanism. Position 278 (R278) interacts with substrate. 306–330 (DSGIRSGLDVVRMLAQGADGVLLGR) contributes to the FMN binding site.

It belongs to the FMN-dependent alpha-hydroxy acid dehydrogenase family. FMN serves as cofactor.

The protein localises to the cell inner membrane. It catalyses the reaction (S)-lactate + A = pyruvate + AH2. Functionally, catalyzes the conversion of L-lactate to pyruvate. Is coupled to the respiratory chain. The chain is L-lactate dehydrogenase from Xanthobacter autotrophicus (strain ATCC BAA-1158 / Py2).